The chain runs to 890 residues: MSCPLAFTFSLPSIFPFPSQLLPFSRHKHPYLLRATPTSATEDVASAVSGAPSIFISQSRSPEWWIDLLRSKVRSNLLREAVLTYVDMIVLGIKPDNYAFPALLKAVADLQDMELGKQIHAHVYKFGYGVDSVTVANTLVNLYRKCGDFGAVYKVFDRISERNQVSWNSLISSLCSFEKWEMALEAFRCMLDENVEPSSFTLVSVVTACSNLPMPEGLMMGKQVHAYGLRKGELNSFIINTLVAMYGKLGKLASSKVLLGSFGGRDLVTWNTVLSSLCQNEQLLEALEYLREMVLEGVEPDEFTISSVLPACSHLEMLRTGKELHAYALKNGSLDENSFVGSALVDMYCNCKQVLSGRRVFDGMFDRKIGLWNAMIAGYSQNEHDKEALLLFIGMEESAGLLANSTTMAGVVPACVRSGAFSRKEAIHGFVVKRGLDRDRFVQNTLMDMYSRLGKIDIAMRIFGKMEDRDLVTWNTMITGYVFSEHHEDALLLLHKMQNLERKVSKGASRVSLKPNSITLMTILPSCAALSALAKGKEIHAYAIKNNLATDVAVGSALVDMYAKCGCLQMSRKVFDQIPQKNVITWNVIIMAYGMHGNGQEAIDLLRMMMVQGVKPNEVTFISVFAACSHSGMVDEGLRIFYVMKPDYGVEPSSDHYACVVDLLGRAGRIKEAYQLMNMMPRDFNKAGAWSSLLGASRIHNNLEIGEIAAQNLIQLEPNVASHYVLLANIYSSAGLWDKATEVRRNMKEQGVRKEPGCSWIEHGDEVHKFVAGDSSHPQSEKLSGYLETLWERMRKEGYVPDTSCVLHNVEEDEKEILLCGHSEKLAIAFGILNTSPGTIIRVAKNLRVCNDCHLATKFISKIVDREIILRDVRRFHRFKNGTCSCGDYW.

The N-terminal 44 residues, 1–44, are a transit peptide targeting the chloroplast; the sequence is MSCPLAFTFSLPSIFPFPSQLLPFSRHKHPYLLRATPTSATEDV. PPR repeat units lie at residues 61–95, 96–130, 132–162, 163–197, 198–231, 235–265, 266–300, 301–335, 337–371, 372–398, 404–438, 439–473, 474–504, 516–550, 551–581, 582–616, 617–652, and 653–683; these read SPEWWIDLLRSKVRSNLLREAVLTYVDMIVLGIKP, DNYAFPALLKAVADLQDMELGKQIHAHVYKFGYGV, SVTVANTLVNLYRKCGDFGAVYKVFDRISER, NQVSWNSLISSLCSFEKWEMALEAFRCMLDENVEP, SSFTLVSVVTACSNLPMPEGLMMGKQVHAYGLRK, NSFIINTLVAMYGKLGKLASSKVLLGSFGGR, DLVTWNTVLSSLCQNEQLLEALEYLREMVLEGVEP, DEFTISSVLPACSHLEMLRTGKELHAYALKNGSLD, NSFVGSALVDMYCNCKQVLSGRRVFDGMFDRKIGL, WNAMIAGYSQNEHDKEALLLFIGMEES, NSTTMAGVVPACVRSGAFSRKEAIHGFVVKRGLDR, DRFVQNTLMDMYSRLGKIDIAMRIFGKMEDRDLVT, WNTMITGYVFSEHHEDALLLLHKMQNLERKV, NSITLMTILPSCAALSALAKGKEIHAYAIKNNLAT, DVAVGSALVDMYAKCGCLQMSRKVFDQIPQK, NVITWNVIIMAYGMHGNGQEAIDLLRMMMVQGVKP, NEVTFISVFAACSHSGMVDEGLRIFYVMKPDYGVEP, and SSDHYACVVDLLGRAGRIKEAYQLMNMMPRD. The type E motif stretch occupies residues 689-764; that stretch reads AWSSLLGASR…EPGCSWIEHG (76 aa). The type E(+) motif stretch occupies residues 765–795; sequence DEVHKFVAGDSSHPQSEKLSGYLETLWERMR. A type DYW motif region spans residues 796 to 890; the sequence is KEGYVPDTSC…NGTCSCGDYW (95 aa).

The protein belongs to the PPR family. PCMP-H subfamily.

It localises to the plastid. The protein resides in the chloroplast. Functionally, involved in RNA editing events in chloroplasts. Required for the editing of a single site in ndhB and ndhF transcripts, which are two plastid-encoded subunits of the chloroplast NAD(P)H dehydrogenase (NDH) complex. Required for the editing of a single site in psbZ. Required for optimal activity of the NDH complex of the photosynthetic electron transport chain. The chain is Pentatricopeptide repeat-containing protein At3g57430, chloroplastic (PCMP-H81) from Arabidopsis thaliana (Mouse-ear cress).